We begin with the raw amino-acid sequence, 352 residues long: Protein RecA (352 aa).

65-72 provides a ligand contact to ATP; sequence GPESSGKT.

This sequence belongs to the RecA family.

The protein resides in the cytoplasm. Its function is as follows. Can catalyze the hydrolysis of ATP in the presence of single-stranded DNA, the ATP-dependent uptake of single-stranded DNA by duplex DNA, and the ATP-dependent hybridization of homologous single-stranded DNAs. It interacts with LexA causing its activation and leading to its autocatalytic cleavage. Plays a functional role in the DNA rearrangement associated with the phenotypic switching from a pathogenic smooth to a nonpathogenic rough form in this bacterium. The chain is Protein RecA from Pseudomonas tolaasii.